The primary structure comprises 334 residues: Tryptophan--tRNA ligase (334 aa).

ATP contacts are provided by residues 11-13 (QPS) and 19-20 (GN). The 'HIGH' region motif lies at 12 to 20 (PSGELTIGN). Asp-135 lines the L-tryptophan pocket. ATP-binding positions include 147 to 149 (GDD), Ile-186, and 195 to 199 (KMSKS). A 'KMSKS' region motif is present at residues 195–199 (KMSKS).

The protein belongs to the class-I aminoacyl-tRNA synthetase family. As to quaternary structure, homodimer.

The protein localises to the cytoplasm. It catalyses the reaction tRNA(Trp) + L-tryptophan + ATP = L-tryptophyl-tRNA(Trp) + AMP + diphosphate + H(+). Catalyzes the attachment of tryptophan to tRNA(Trp). The polypeptide is Tryptophan--tRNA ligase (Haemophilus influenzae (strain ATCC 51907 / DSM 11121 / KW20 / Rd)).